A 376-amino-acid chain; its full sequence is 23S rRNA (uracil(747)-C(5))-methyltransferase RlmC (376 aa).

Residues cysteine 3, cysteine 11, cysteine 14, and cysteine 87 each coordinate [4Fe-4S] cluster. Positions 212, 241, 262, and 307 each coordinate S-adenosyl-L-methionine. Cysteine 334 functions as the Nucleophile in the catalytic mechanism.

Belongs to the class I-like SAM-binding methyltransferase superfamily. RNA M5U methyltransferase family. RlmC subfamily.

The catalysed reaction is uridine(747) in 23S rRNA + S-adenosyl-L-methionine = 5-methyluridine(747) in 23S rRNA + S-adenosyl-L-homocysteine + H(+). In terms of biological role, catalyzes the formation of 5-methyl-uridine at position 747 (m5U747) in 23S rRNA. This chain is 23S rRNA (uracil(747)-C(5))-methyltransferase RlmC, found in Salmonella typhimurium (strain LT2 / SGSC1412 / ATCC 700720).